The chain runs to 803 residues: MGVGLCGRGIVAKPRLYEVASDLGTDSKTLMGILREMGEFVKSPSSALEPPVVRKLAKAFAEKYPDKVEEKKEHTPPAPVVETPKAPPPLPRPIIRHAVRGVPSGAPRPGNNPYAPRQGMGQLATPGPATKRPVKFKAEGDKKPASTHRRVPAPLPQKRTPLRGRGAPGAFGRGNKPKSRKSKTLKRQEFEMRDAPVIGGVTIPRGDGRVIRLMQGASVTDFAEKIDVLPANLLSVLFHLGEMATATESLDEATFEILAEEIGYKVQIVSPDDEDRALLESFSVNLAAEHAEDSELDLAIRPPVVTIMGHVDHGKTLLLDTIRNTNTLAEESGGITQHIGAYQVSVGDRFVTFIDTPGHEAFTAMRARGAKVTDIAVLVVAADDGIMPQTIEALDHARSADVPIVVAVNKIDKEGANPAKIRQQMTEFDVIPEEYGGDVMFIDISAKTGQGVDALLEAILLTADAALELRANPDRTARGVTIEAKLDAGRGAVATVLVQSGTLRVGDRVVTGCAYGRVRAMVDENGLPVESAPPSRPVRVQGLSSVPKAGDSFIVVAEDRQARQIAEKREANERNAQLAKSRKRVSLEDFTRAIQEGRVQSLNMIIKGDVSGAVEALEESLSKLDVGEEVSLRIIHRGVGAITESDVNLATVDNAVVIGFNVRPDRKARDRAAREGVDVRFYSVIYDAIEDIEKSLKGLLKPELEERKLGLAIVKEVFHSSRVGTIAGCSVESGSITRNAKARLIRDGVVVVSDLTVTSLRRFKDDVTEVKSGFECGVGLGSCDDIRIGDEIETIQIVEKPRA.

The segment covering 65–75 (PDKVEEKKEHT) has biased composition (basic and acidic residues). Positions 65–186 (PDKVEEKKEH…PKSRKSKTLK (122 aa)) are disordered. The segment covering 175–185 (NKPKSRKSKTL) has biased composition (basic residues). In terms of domain architecture, tr-type G spans 300-468 (IRPPVVTIMG…ILLTADAALE (169 aa)). A G1 region spans residues 309 to 316 (GHVDHGKT). Residue 309-316 (GHVDHGKT) coordinates GTP. Residues 334–338 (GITQH) form a G2 region. Residues 355-358 (DTPG) are G3. GTP-binding positions include 355-359 (DTPGH) and 409-412 (NKID). The segment at 409–412 (NKID) is G4. A G5 region spans residues 445 to 447 (SAK).

The protein belongs to the TRAFAC class translation factor GTPase superfamily. Classic translation factor GTPase family. IF-2 subfamily.

It is found in the cytoplasm. In terms of biological role, one of the essential components for the initiation of protein synthesis. Protects formylmethionyl-tRNA from spontaneous hydrolysis and promotes its binding to the 30S ribosomal subunits. Also involved in the hydrolysis of GTP during the formation of the 70S ribosomal complex. In Tropheryma whipplei (strain TW08/27) (Whipple's bacillus), this protein is Translation initiation factor IF-2.